Reading from the N-terminus, the 356-residue chain is Tyrosine recombinase XerS (356 aa).

The region spanning 16–121 is the Core-binding (CB) domain; that stretch reads TMPWYILEYY…ALSSLYKYLT (106 aa). A Tyr recombinase domain is found at 169 to 354; that stretch reads EFLQYIDREY…VNDEQKNALN (186 aa). Residues Arg210, Lys234, His306, Arg309, and His332 contribute to the active site. Tyr341 (O-(3'-phospho-DNA)-tyrosine intermediate) is an active-site residue.

Belongs to the 'phage' integrase family. XerS subfamily.

Its subcellular location is the cytoplasm. Its activity is regulated as follows. FtsK is required for recombination. In terms of biological role, site-specific tyrosine recombinase, which acts by catalyzing the cutting and rejoining of the recombining DNA molecules. Essential to convert dimers of the bacterial chromosome into monomers to permit their segregation at cell division. This is Tyrosine recombinase XerS from Streptococcus gordonii (strain Challis / ATCC 35105 / BCRC 15272 / CH1 / DL1 / V288).